Here is a 238-residue protein sequence, read N- to C-terminus: Ribonuclease PH (238 aa).

Phosphate contacts are provided by residues Arg87 and 125 to 127; that span reads GTR.

This sequence belongs to the RNase PH family. Homohexameric ring arranged as a trimer of dimers.

It catalyses the reaction tRNA(n+1) + phosphate = tRNA(n) + a ribonucleoside 5'-diphosphate. Phosphorolytic 3'-5' exoribonuclease that plays an important role in tRNA 3'-end maturation. Removes nucleotide residues following the 3'-CCA terminus of tRNAs; can also add nucleotides to the ends of RNA molecules by using nucleoside diphosphates as substrates, but this may not be physiologically important. Probably plays a role in initiation of 16S rRNA degradation (leading to ribosome degradation) during starvation. The chain is Ribonuclease PH from Synechococcus elongatus (strain ATCC 33912 / PCC 7942 / FACHB-805) (Anacystis nidulans R2).